We begin with the raw amino-acid sequence, 210 residues long: Thymidylate kinase (210 aa).

10 to 17 contacts ATP; sequence GGEGAGKS.

Belongs to the thymidylate kinase family.

It carries out the reaction dTMP + ATP = dTDP + ADP. Functionally, phosphorylation of dTMP to form dTDP in both de novo and salvage pathways of dTTP synthesis. The polypeptide is Thymidylate kinase (Magnetococcus marinus (strain ATCC BAA-1437 / JCM 17883 / MC-1)).